Here is a 278-residue protein sequence, read N- to C-terminus: Truncated FRIGIDA-like protein 1 (278 aa).

Residues 1–36 adopt a coiled-coil conformation; sequence MTASETIATAINQIDEKKEKLKKAFDDLQAHRSLLS.

The protein belongs to the Frigida family.

Its function is as follows. Truncated inactive FRIGIDA-like 1 protein. This is Truncated FRIGIDA-like protein 1 (FRL1) from Arabidopsis thaliana (Mouse-ear cress).